The sequence spans 892 residues: Translation initiation factor IF-2 (892 aa).

Disordered regions lie at residues 32-102 (LAQA…PGDA) and 114-300 (KAPE…KQAE). The segment covering 35–48 (AGSSDTKNSPASKA) has biased composition (polar residues). Over residues 139 to 166 (QEEKKESSEETSPERVEETLIIRTRTEP) the composition is skewed to basic and acidic residues. Over residues 200 to 211 (AASTEETTQQQP) the composition is skewed to low complexity. Positions 212–224 (RQNDAASYNNKQQ) are enriched in polar residues. Over residues 225 to 238 (PSGTSSRPASSAPS) the composition is skewed to low complexity. Residues 252 to 276 (RGSERDRSKRSDESVKAFTGRDRYG) show a composition bias toward basic and acidic residues. The tr-type G domain maps to 397–566 (IRSPIVAFMG…ALQAEVLELK (170 aa)). The G1 stretch occupies residues 406 to 413 (GHVDHGKT). Position 406–413 (406–413 (GHVDHGKT)) interacts with GTP. Positions 431–435 (AITQH) are G2. The tract at residues 452–455 (DTPG) is G3. GTP is bound by residues 452-456 (DTPGH) and 506-509 (NKCD). The G4 stretch occupies residues 506–509 (NKCD). Residues 542 to 544 (SAK) are G5.

The protein belongs to the TRAFAC class translation factor GTPase superfamily. Classic translation factor GTPase family. IF-2 subfamily.

Its subcellular location is the cytoplasm. In terms of biological role, one of the essential components for the initiation of protein synthesis. Protects formylmethionyl-tRNA from spontaneous hydrolysis and promotes its binding to the 30S ribosomal subunits. Also involved in the hydrolysis of GTP during the formation of the 70S ribosomal complex. The sequence is that of Translation initiation factor IF-2 from Chlamydia trachomatis serovar A (strain ATCC VR-571B / DSM 19440 / HAR-13).